The following is a 645-amino-acid chain: MFYAQFVLAKKGPLAKVWLAAHWEKKLTKAQIFETDVPQAIEEVIRPKVKMALRTVGHLLLGIVRIYSKKTRYLLADTNEAYQKMKINFRNGFSFEVDIPENAEIEEDFSNFIDKYNITVPEFHDADYNEQLIMANVSRREDITMKETVNFNVEFNIDADFDGFGDEGESWQLDHLYGSVEPLSLRPTPQPESLMEVERDRDVAANGTEISRIDADSVIFSEGPTRPNLIFDNQEGGNFMPEMNLKVENQTLENDGGVGPADMFSSMIHPVREHAVADVQNDDGMDFDYQPFEPENVEPSRPQSPESFALEPLDVEHMEGRKKRQRKARKLIVDAETMISNDAFREQQEDFSDTMRVVEMAPPTRKMFNLCVSGDLQHLSREPGCKMFNRELLQRYRRCLVTREFDLNYTMQELSDSSSFTPSMEAQAEPWEDLNLNEDIQEDIQAQGPAVDEFFNDVRMDDDDDRQPAQEMDFGDNFDFPQEVEHQECAPIPIQSGFAGENKENEDAEDWSDPFGSSNSSRRGQLEAYGFGNTSTYKEDDGKWAKRAKHILKKVSADIETSGQADFSSVTATAKNRKQAAEQFYSLLTLAKSQAISVDQSEPYGEIVIRPGANFKEACPLSSPKPMGLGNTMENSTMRTPMRPV.

Disordered regions lie at residues 292-311 (FEPE…FALE), 495-527 (QSGF…GQLE), and 619-645 (CPLS…MRPV).

Belongs to the rad21 family. In terms of assembly, component of the cohesin complex, composed of the smc-1 and smc-3 heterodimer attached via their hinge domain, scc-1 which links them, and scc-3. Interacts with smc-1, smc-3, scc-3 and tim-1.

The protein resides in the nucleus. It localises to the chromosome. It is found in the cytoplasm. In terms of biological role, cleavable component of the cohesin complex involved in chromosome cohesion during cell cycle. The cohesin complex is required for the cohesion of sister chromatids after DNA replication. The cohesin complex apparently forms a large proteinaceous ring within which sister chromatids can be trapped. At metaphase-anaphase transition, this protein is cleaved and dissociates from chromatin, allowing sister chromatids to segregate. In Caenorhabditis elegans, this protein is Sister chromatid cohesion protein 1.